Here is a 374-residue protein sequence, read N- to C-terminus: All-trans-retinol dehydrogenase [NAD(+)] ADH7 (374 aa).

M1 carries the post-translational modification N-acetylmethionine. Zn(2+) contacts are provided by C47, H68, C98, C101, C104, C112, and C174. NAD(+) contacts are provided by residues 199 to 204 (GLGGVG), D223, K228, 292 to 294 (VGA), and R369.

The protein belongs to the zinc-containing alcohol dehydrogenase family. Class-IV subfamily. Homodimer. Requires Zn(2+) as cofactor. In terms of tissue distribution, preferentially expressed in stomach.

The protein localises to the cytoplasm. It catalyses the reaction a primary alcohol + NAD(+) = an aldehyde + NADH + H(+). The catalysed reaction is 10-hydroxydecanoate + NAD(+) = 10-oxodecanoate + NADH + H(+). It carries out the reaction all-trans-retinol + NAD(+) = all-trans-retinal + NADH + H(+). The enzyme catalyses 9-cis-retinol + NAD(+) = 9-cis-retinal + NADH + H(+). It catalyses the reaction all-trans-3,4-didehydroretinol + NAD(+) = all-trans-3,4-didehydroretinal + NADH + H(+). The catalysed reaction is all-trans-4-hydroxyretinol + NAD(+) = all-trans-4-hydroxyretinal + NADH + H(+). It carries out the reaction all-trans-4-oxoretinol + NAD(+) = all-trans-4-oxoretinal + NADH + H(+). The enzyme catalyses 12-hydroxydodecanoate + NAD(+) = 12-oxododecanoate + NADH + H(+). It catalyses the reaction 16-hydroxyhexadecanoate + NAD(+) = 16-oxohexadecanoate + NADH + H(+). The catalysed reaction is hexan-1-ol + NAD(+) = hexanal + NADH + H(+). It carries out the reaction (E)-hex-2-en-1-ol + NAD(+) = (E)-hex-2-enal + NADH + H(+). The enzyme catalyses (E)-4-hydroxynon-2-en-1-ol + NAD(+) = (E)-4-hydroxynon-2-enal + NADH + H(+). Retinol oxidation is inhibited by the detergent Tween 80. Ethanol inhibits both all-trans-retinol and 9-cis-retinol oxidation. 13-cis-retinol is an effective competitive inhibitor of the 9-cis-retinol oxidation. All-trans-retinoic acid is a powerful inhibitor of all-trans-retinol oxidation. 13-cis-retinoic acid is a powerful inhibitor of all-trans-retinol oxidation. Cimetidine and ranitidine inhibited ethanol oxidation. Its function is as follows. Catalyzes the NAD-dependent oxidation of all-trans-retinol, alcohol, aldehyde and omega-hydroxy fatty acids and their derivatives. Oxidizes preferentially all trans-retinol, all-trans-4-hydroxyretinol, 9-cis-retinol, 2-hexenol, and long chain omega-hydroxy fatty acids such as juniperic acid. In vitro can also catalyze the NADH-dependent reduction of all-trans-retinal and aldehydes and their derivatives. Reduces preferentially all trans-retinal, all-trans-4-oxoretinal and hexanal. Catalyzes in the oxidative direction with higher efficiency. Therefore may participate in retinoid metabolism, fatty acid omega-oxidation, and elimination of cytotoxic aldehydes produced by lipid peroxidation. This is All-trans-retinol dehydrogenase [NAD(+)] ADH7 (Adh7) from Rattus norvegicus (Rat).